The primary structure comprises 1093 residues: Error-prone DNA polymerase (1093 aa).

Residues Met-1 to Ser-55 form a disordered region. Residues Glu-12–Gly-25 show a composition bias toward basic and acidic residues.

The protein belongs to the DNA polymerase type-C family. DnaE2 subfamily.

The protein localises to the cytoplasm. The enzyme catalyses DNA(n) + a 2'-deoxyribonucleoside 5'-triphosphate = DNA(n+1) + diphosphate. Its function is as follows. DNA polymerase involved in damage-induced mutagenesis and translesion synthesis (TLS). It is not the major replicative DNA polymerase. The protein is Error-prone DNA polymerase of Mycolicibacterium paratuberculosis (strain ATCC BAA-968 / K-10) (Mycobacterium paratuberculosis).